The primary structure comprises 122 residues: Large ribosomal subunit protein uL14 (122 aa).

The protein belongs to the universal ribosomal protein uL14 family. As to quaternary structure, part of the 50S ribosomal subunit. Forms a cluster with proteins L3 and L19. In the 70S ribosome, L14 and L19 interact and together make contacts with the 16S rRNA in bridges B5 and B8.

Functionally, binds to 23S rRNA. Forms part of two intersubunit bridges in the 70S ribosome. This is Large ribosomal subunit protein uL14 from Finegoldia magna (strain ATCC 29328 / DSM 20472 / WAL 2508) (Peptostreptococcus magnus).